Here is a 369-residue protein sequence, read N- to C-terminus: Putative FAD-dependent monooxygenase YetM (369 aa).

Residues 1-32 (MKHMLIAGGGIGGLSAAISLRKAGFSVTLCEA) form the signal peptide. FAD is bound by residues G12, 31–32 (EA), V126, and D285.

FAD is required as a cofactor.

The chain is Putative FAD-dependent monooxygenase YetM (yetM) from Bacillus subtilis (strain 168).